The following is a 266-amino-acid chain: Putative transmembrane ascorbate-dependent reductase CYB561 homolog (266 aa).

The Cytoplasmic segment spans residues 1-22; it reads MSLLFDPGFVILREDQSVKLFN. A helical membrane pass occupies residues 23-43; it reads IILVMSQVFGGLAVLLVTIWM. In terms of domain architecture, Cytochrome b561 spans 27–240; sequence MSQVFGGLAV…YTVCVLLLVL (214 aa). The Vesicular segment spans residues 44 to 61; it reads SKFESGFAWNEDPDKEFN. Residues 62 to 82 traverse the membrane as a helical segment; the sequence is YHPTFMIMGMVFLFGEALLVY. Residues H63, R83, and K90 each contribute to the heme b site. Residues 83-95 lie on the Cytoplasmic side of the membrane; the sequence is RVFRNERKKFSKT. The L-ascorbate site is built by K90 and K94. The helical transmembrane segment at 96 to 116 threads the bilayer; that stretch reads LHVILHSCVLVFMLMALKAVF. Heme b-binding positions include H97, 134–137, and H139; that span reads NLVS. Topologically, residues 117–141 are vesicular; the sequence is DYHNLHKDPSGNPAPIVNLVSLHSW. A helical membrane pass occupies residues 142–162; that stretch reads IGLSVVILYFAQYIVGFITYF. At 163-176 the chain is on the cytoplasmic side; the sequence is FPGMPIPIRQLVMP. Residue R171 coordinates L-ascorbate. The helical transmembrane segment at 177 to 197 threads the bilayer; sequence FHQMFGVLIFIFVSITVAMGI. Positions 178 and 199 each coordinate heme b. At 198-219 the chain is on the vesicular side; that stretch reads SERAAWKHTCWTKEGQMCAQQA. The chain crosses the membrane as a helical span at residues 220 to 240; the sequence is TSSFVGVFTFLYTVCVLLLVL. At 241 to 266 the chain is on the cytoplasmic side; the sequence is NPRWKRQSLPEEEGLHHLTSSHSMSD. K245 contributes to the heme b binding site.

It depends on heme b as a cofactor.

It is found in the membrane. The enzyme catalyses monodehydro-L-ascorbate radical(out) + L-ascorbate(in) = monodehydro-L-ascorbate radical(in) + L-ascorbate(out). Putative transmembrane reductase that uses ascorbate as an electron donor in the cytoplasm and transfers electrons across membranes to reduce monodehydro-L-ascorbate radical in the lumen of secretory vesicles. This chain is Putative transmembrane ascorbate-dependent reductase CYB561 homolog, found in Caenorhabditis elegans.